Consider the following 278-residue polypeptide: NAD kinase (278 aa).

Aspartate 67 (proton acceptor) is an active-site residue. NAD(+) contacts are provided by residues aspartate 67–glycine 68, arginine 72, asparagine 137–glutamate 138, lysine 148, arginine 165, aspartate 167, threonine 178–serine 183, and glutamine 237.

This sequence belongs to the NAD kinase family. A divalent metal cation serves as cofactor.

It localises to the cytoplasm. It carries out the reaction NAD(+) + ATP = ADP + NADP(+) + H(+). Functionally, involved in the regulation of the intracellular balance of NAD and NADP, and is a key enzyme in the biosynthesis of NADP. Catalyzes specifically the phosphorylation on 2'-hydroxyl of the adenosine moiety of NAD to yield NADP. This Thermococcus gammatolerans (strain DSM 15229 / JCM 11827 / EJ3) protein is NAD kinase.